The primary structure comprises 430 residues: MTAPLKAVEGSVDLPALMLQLGRQARSAARVLAIAPTAQKNLALAAMERAIRVNAAAILAANAEDVAEVKASGASSAFIDRLTLTPARIAAMADGIKVIHDIADPVGAVTERWQRPNGMTIERVRVPLGVIGVIFESRPNVTADAGVLGLKSGNAVMLRGGSDSFRSCRAIHDCLVQGLREADLPEAAITLVPVRDRAAVGLMLSGLNGNVDVIVPRGGKSLVARVEAEARVPVFAHLEGVNHVYVDRGADLAMAKAIVLNAKMRRPGVCGAAETLLVDRAAAEADLAPLLSVLIESGCEVRGDAEMQRVDTRVKPVAEEDWSTEYGEPIIAAKVVDGLDGALLHIARYGSHHTEAIVTQDEAAAARFLNEVDAAIVLHNASTQFADGGEFGFGAEIGIATGKFHARGPVGAEQLTSFKYRVHGTGQTRP.

The protein belongs to the gamma-glutamyl phosphate reductase family.

The protein resides in the cytoplasm. The enzyme catalyses L-glutamate 5-semialdehyde + phosphate + NADP(+) = L-glutamyl 5-phosphate + NADPH + H(+). Its pathway is amino-acid biosynthesis; L-proline biosynthesis; L-glutamate 5-semialdehyde from L-glutamate: step 2/2. Catalyzes the NADPH-dependent reduction of L-glutamate 5-phosphate into L-glutamate 5-semialdehyde and phosphate. The product spontaneously undergoes cyclization to form 1-pyrroline-5-carboxylate. The sequence is that of Gamma-glutamyl phosphate reductase from Rhodopseudomonas palustris (strain BisA53).